The chain runs to 312 residues: Homoserine O-succinyltransferase (312 aa).

C142 (acyl-thioester intermediate) is an active-site residue. Substrate-binding residues include K163 and S192. The active-site Proton acceptor is the H235. E237 is an active-site residue. A substrate-binding site is contributed by R249.

It belongs to the MetA family.

The protein localises to the cytoplasm. The enzyme catalyses L-homoserine + succinyl-CoA = O-succinyl-L-homoserine + CoA. It functions in the pathway amino-acid biosynthesis; L-methionine biosynthesis via de novo pathway; O-succinyl-L-homoserine from L-homoserine: step 1/1. Its function is as follows. Transfers a succinyl group from succinyl-CoA to L-homoserine, forming succinyl-L-homoserine. The protein is Homoserine O-succinyltransferase of Alteromonas mediterranea (strain DSM 17117 / CIP 110805 / LMG 28347 / Deep ecotype).